A 359-amino-acid chain; its full sequence is 3-dehydroquinate synthase (359 aa).

Residues 106-110, 130-131, K143, and K152 each bind NAD(+); these read GVVGD and TS. Zn(2+)-binding residues include E185, H246, and H263.

This sequence belongs to the sugar phosphate cyclases superfamily. Dehydroquinate synthase family. Co(2+) serves as cofactor. The cofactor is Zn(2+). Requires NAD(+) as cofactor.

It is found in the cytoplasm. It carries out the reaction 7-phospho-2-dehydro-3-deoxy-D-arabino-heptonate = 3-dehydroquinate + phosphate. Its pathway is metabolic intermediate biosynthesis; chorismate biosynthesis; chorismate from D-erythrose 4-phosphate and phosphoenolpyruvate: step 2/7. Its function is as follows. Catalyzes the conversion of 3-deoxy-D-arabino-heptulosonate 7-phosphate (DAHP) to dehydroquinate (DHQ). The sequence is that of 3-dehydroquinate synthase from Clostridium kluyveri (strain ATCC 8527 / DSM 555 / NBRC 12016 / NCIMB 10680 / K1).